Here is a 309-residue protein sequence, read N- to C-terminus: Fructosamine-3-kinase (309 aa).

N-acetylmethionine is present on methionine 1. 89–91 lines the ATP pocket; that stretch reads EHL. The active-site Proton acceptor is aspartate 217.

Belongs to the fructosamine kinase family. As to quaternary structure, monomer. As to expression, expressed in red blood cells, brain, heart, kidney and muscle. Lower expression is observed in liver. Not expressed in lung, spleen, testis and thymus.

The enzyme catalyses N(6)-(D-fructosyl)-L-lysyl-[protein] + ATP = N(6)-(3-O-phospho-D-fructosyl)-L-lysyl-[protein] + ADP + H(+). It catalyses the reaction N(6)-D-ribulosyl-L-lysyl-[protein] + ATP = N(6)-(3-O-phospho-D-ribulosyl)-L-lysyl-[protein] + ADP + H(+). The catalysed reaction is N(6)-(D-psicosyl)-L-lysyl-[protein] + ATP = N(6)-(3-O-phospho-D-psicosyl)-L-lysyl-[protein] + ADP + H(+). Functionally, fructosamine-3-kinase involved in protein deglycation by mediating phosphorylation of fructoselysine residues on glycated proteins, to generate fructoselysine-3 phosphate. Fructoselysine-3 phosphate adducts are unstable and decompose under physiological conditions. Involved in intracellular deglycation in erythrocytes and pancreatic islets. Involved in the response to oxidative stress by mediating deglycation of NFE2L2/NRF2, glycation impairing NFE2L2/NRF2 function. Also able to phosphorylate psicosamines and ribulosamines. The sequence is that of Fructosamine-3-kinase from Mus musculus (Mouse).